The primary structure comprises 515 residues: 13S globulin seed storage protein (515 aa).

Residues M1–A22 form the signal peptide. The tract at residues A23–L96 is igE-binding epitope. 2 cysteine pairs are disulfide-bonded: C47–C80 and C123–C327. The 221-residue stretch at L52–S272 folds into the Cupin type-1 1 domain. Residues L97–A172 are igE-binding epitope with a very strong IgE-binding activity. Disordered stretches follow at residues C123 to H156, L210 to D241, and P295 to N320. 3 stretches are compositionally biased toward basic and acidic residues: residues H141–H156, G217–S239, and P295–S316. IgE-binding epitope stretches follow at residues G173–A248 and N249–N320. Residues Q333 to Y482 form the Cupin type-1 2 domain. Residues R347–N387 form an igE-binding epitope with a strong IgE-binding activity region. 3 igE-binding epitope regions span residues E407–G457, E440–I476, and D475–R511.

It belongs to the 11S seed storage protein (globulins) family. In terms of assembly, homohexamer. In terms of processing, proteolytically processed from a single precursor to produce an acidic and a basic chain that are linked by a disulfide bond. Expressed in seeds (at protein level).

Functionally, seed storage protein. The sequence is that of 13S globulin seed storage protein from Fagopyrum tataricum (Tartarian buckwheat).